Here is a 160-residue protein sequence, read N- to C-terminus: Probable transcriptional regulator YgiV (160 aa).

Represses expression of mcbR. This chain is Probable transcriptional regulator YgiV (ygiV), found in Escherichia coli (strain K12).